A 95-amino-acid polypeptide reads, in one-letter code: Protein TusB (95 aa).

This sequence belongs to the DsrH/TusB family. As to quaternary structure, heterohexamer, formed by a dimer of trimers. The hexameric TusBCD complex contains 2 copies each of TusB, TusC and TusD. The TusBCD complex interacts with TusE.

It is found in the cytoplasm. Its function is as follows. Part of a sulfur-relay system required for 2-thiolation of 5-methylaminomethyl-2-thiouridine (mnm(5)s(2)U) at tRNA wobble positions. The protein is Protein TusB of Salmonella arizonae (strain ATCC BAA-731 / CDC346-86 / RSK2980).